The following is a 285-amino-acid chain: Secreted alkaline triacylglycerol lipase (285 aa).

The N-terminal stretch at methionine 1–serine 20 is a signal peptide. Serine 159 acts as the Nucleophile in catalysis. Active-site charge relay system residues include aspartate 215 and histidine 268.

It belongs to the AB hydrolase superfamily. FaeA family.

Its subcellular location is the secreted. It catalyses the reaction a triacylglycerol + H2O = a diacylglycerol + a fatty acid + H(+). Its function is as follows. Secreted alkaline lipase that hydrolyzes acylglycerol lipids such as triacylglycerols and consequently releases free fatty acid. Is able to hydrolyze tributyrin (1,2,3-tributyryl-glycerin). This Penicillium cyclopium protein is Secreted alkaline triacylglycerol lipase.